The chain runs to 231 residues: Non-fluorescent flavoprotein (231 aa).

Belongs to the bacterial luciferase oxidoreductase family. In terms of assembly, homodimer. FMN is required as a cofactor.

The protein is Non-fluorescent flavoprotein (luxF) of Photobacterium phosphoreum.